Reading from the N-terminus, the 386-residue chain is Latent membrane protein 1 (386 aa).

Over 2–23 (DLDLERGPPGPRRPPRGPPLSS) the chain is Cytoplasmic. Residues 24 to 44 (SIGLALLLLLLALLFWLYIIM) form a helical membrane-spanning segment. Topologically, residues 45 to 51 (SNWTGGA) are extracellular. Residues 52–72 (LLVLYAFALMLVIIILIIFIF) form a helical membrane-spanning segment. Over 73-75 (RRD) the chain is Cytoplasmic. A helical transmembrane segment spans residues 76-96 (LLCPLGALCLLLLMITLLLIA). The Extracellular segment spans residues 97–106 (LWNLHGQALY). A helical transmembrane segment spans residues 107 to 127 (LGIVLFIFGCLLVLGLWIYLL). Residues 128–139 (EILWRLGATIWQ) are Cytoplasmic-facing. Residues 140–160 (LLAFFLAFFLDIILLIIALYL) form a helical membrane-spanning segment. The Extracellular segment spans residues 161-163 (QQN). Residues 164 to 184 (WWTLLVDLLWLLLFLAILIWM) traverse the membrane as a helical segment. The Cytoplasmic segment spans residues 185–386 (YYHGQRHSDE…HGPVQLSYYD (202 aa)). The interval 194 to 232 (EHHHDDSLPHPQQATDDSSNQSDSNSNEGRHLLLVSGAG) is CTAR1. Residues 194–386 (EHHHDDSLPH…HGPVQLSYYD (193 aa)) form a disordered region. 2 stretches are compositionally biased toward low complexity: residues 209-220 (DDSSNQSDSNSN) and 251-267 (NGPQ…PQDP). A CTAR2 region spans residues 342–386 (GGGGHSHDSGHDGIDPHLPTLLLGTSGSGGDDDDPHGPVQLSYYD). The segment covering 346-356 (HSHDSGHDGID) has biased composition (basic and acidic residues). Low complexity predominate over residues 357–366 (PHLPTLLLGT).

It belongs to the herpesviridae LMP-1 family. As to quaternary structure, interacts (via PXQXT motif) with host tumor necrosis factor receptor-associated factor (TRAF) proteins TRAF1, TRAF2, TRAF3 and TRAF5. Interacts with TRAF3; this interaction activates B lymphocytes. Interacts with human protein ZMYND11; leading to negatively regulate NF-kappa-B activation. Interacts with host UBE2I; this interaction induces the sumoylation of various cellular proteins. Interacts with host IRF7. Interacts with host TYK2. Post-translationally, ubiquitinated on the N-terminus.

It is found in the host cell membrane. Its function is as follows. Acts as a CD40 functional homolog to prevent apoptosis of infected B-lymphocytes and drive their proliferation. Functions as a constitutively active tumor necrosis factor receptor that induces the activation of several signaling pathways, including those of the NF-kappa-B family. LMP1 signaling leads to up-regulation of antiapoptotic proteins and provide growth signals in latently infected cells. Interacts with host UBE2I and subsequently affects the sumoylation state of several cellular proteins. For example, induces the sumoylation of host IRF7 thereby limiting its transcriptional activity and modulating the activation of innate immune responses. Also inhibits host IFN-alpha-stimulated STAT2 nuclear translocation and interferon-stimulated response element transcriptional activity by interacting with and inhibiting host TYK2. Induces SUMO expression during viral latency thereby dysregulating the host sumoylation processes. The protein is Latent membrane protein 1 (LMP1) of Homo sapiens (Human).